The following is a 241-amino-acid chain: Demethylmenaquinone methyltransferase (241 aa).

S-adenosyl-L-methionine is bound by residues Thr-68, Asp-88, and Asp-114–Ala-115.

This sequence belongs to the class I-like SAM-binding methyltransferase superfamily. MenG/UbiE family.

The catalysed reaction is a 2-demethylmenaquinol + S-adenosyl-L-methionine = a menaquinol + S-adenosyl-L-homocysteine + H(+). It participates in quinol/quinone metabolism; menaquinone biosynthesis; menaquinol from 1,4-dihydroxy-2-naphthoate: step 2/2. Its function is as follows. Methyltransferase required for the conversion of demethylmenaquinol (DMKH2) to menaquinol (MKH2). This is Demethylmenaquinone methyltransferase from Deinococcus radiodurans (strain ATCC 13939 / DSM 20539 / JCM 16871 / CCUG 27074 / LMG 4051 / NBRC 15346 / NCIMB 9279 / VKM B-1422 / R1).